Consider the following 457-residue polypeptide: Argininosuccinate lyase (457 aa).

The protein belongs to the lyase 1 family. Argininosuccinate lyase subfamily.

It is found in the cytoplasm. The enzyme catalyses 2-(N(omega)-L-arginino)succinate = fumarate + L-arginine. The protein operates within amino-acid biosynthesis; L-arginine biosynthesis; L-arginine from L-ornithine and carbamoyl phosphate: step 3/3. The polypeptide is Argininosuccinate lyase (Bacillus pumilus (strain SAFR-032)).